A 133-amino-acid chain; its full sequence is Putative elongation factor 1-delta-like protein (133 aa).

A compositionally biased stretch (low complexity) spans 58 to 73; that stretch reads SLAGSLGPGASSGPSG. Disordered stretches follow at residues 58 to 77 and 89 to 133; these read SLAG…DHSE and NQRD…TSRG. Basic and acidic residues predominate over residues 89–102; the sequence is NQRDLAERAGEELA.

This sequence belongs to the EF-1-beta/EF-1-delta family.

In Homo sapiens (Human), this protein is Putative elongation factor 1-delta-like protein (EEF1DP3).